Consider the following 343-residue polypeptide: Protein RecA (343 aa).

An ATP-binding site is contributed by 66-73; sequence GPESSGKT.

Belongs to the RecA family.

The protein resides in the cytoplasm. Functionally, can catalyze the hydrolysis of ATP in the presence of single-stranded DNA, the ATP-dependent uptake of single-stranded DNA by duplex DNA, and the ATP-dependent hybridization of homologous single-stranded DNAs. It interacts with LexA causing its activation and leading to its autocatalytic cleavage. This is Protein RecA from Rickettsia conorii (strain ATCC VR-613 / Malish 7).